The sequence spans 674 residues: DNA ligase (674 aa).

Residues 34 to 38, 84 to 85, and E116 each bind NAD(+); these read DAEYD and SL. K118 serves as the catalytic N6-AMP-lysine intermediate. Residues R139, E174, K291, and K315 each contribute to the NAD(+) site. Zn(2+) contacts are provided by C409, C412, C425, and C430. The BRCT domain maps to 586–674; the sequence is REGEALKGLT…TGKDPRALTA (89 aa).

Belongs to the NAD-dependent DNA ligase family. LigA subfamily. Mg(2+) serves as cofactor. The cofactor is Mn(2+).

The enzyme catalyses NAD(+) + (deoxyribonucleotide)n-3'-hydroxyl + 5'-phospho-(deoxyribonucleotide)m = (deoxyribonucleotide)n+m + AMP + beta-nicotinamide D-nucleotide.. Its function is as follows. DNA ligase that catalyzes the formation of phosphodiester linkages between 5'-phosphoryl and 3'-hydroxyl groups in double-stranded DNA using NAD as a coenzyme and as the energy source for the reaction. It is essential for DNA replication and repair of damaged DNA. The polypeptide is DNA ligase (Thermus sp. (strain AK16D)).